A 97-amino-acid polypeptide reads, in one-letter code: CRISPR-associated endoribonuclease Cas2 1 (97 aa).

D12 is a Mg(2+) binding site.

Belongs to the CRISPR-associated endoribonuclease Cas2 protein family. In terms of assembly, homodimer, forms a heterotetramer with a Cas1 homodimer. Requires Mg(2+) as cofactor.

In terms of biological role, CRISPR (clustered regularly interspaced short palindromic repeat) is an adaptive immune system that provides protection against mobile genetic elements (viruses, transposable elements and conjugative plasmids). CRISPR clusters contain sequences complementary to antecedent mobile elements and target invading nucleic acids. CRISPR clusters are transcribed and processed into CRISPR RNA (crRNA). Functions as a ssRNA-specific endoribonuclease. Involved in the integration of spacer DNA into the CRISPR cassette. The polypeptide is CRISPR-associated endoribonuclease Cas2 1 (Francisella tularensis subsp. novicida (strain U112)).